The chain runs to 523 residues: Sensory neuron membrane protein 1 (523 aa).

Residues 1 to 10 (MRLARGIKYA) lie on the Cytoplasmic side of the membrane. A helical transmembrane segment spans residues 11 to 31 (VIGAGVALFGVLFGWVMFPAI). The Extracellular portion of the chain corresponds to 32 to 458 (LKSQLKKEMA…NQLFIPKRIV (427 aa)). Asn-67 and Asn-229 each carry an N-linked (GlcNAc...) asparagine glycan. Disulfide bonds link Cys-268-Cys-333, Cys-297-Cys-352, and Cys-335-Cys-341. Asn-440 carries N-linked (GlcNAc...) asparagine glycosylation. A helical transmembrane segment spans residues 459–479 (SVIRWWLLSFGMLAALGGVIF). The Cytoplasmic portion of the chain corresponds to 480–523 (HFKDDIMRIAIKGDSSVTKVNPEDGEQKDVSVIGQSHEPPKINM). Residues 499-523 (VNPEDGEQKDVSVIGQSHEPPKINM) form a disordered region.

The protein belongs to the CD36 family. Localizes to both male and female antennae but not the leg, wing, gut, head, or thoracic ganglia. Detected throughout the sensory epithelium, associating with both sex-pheromone sensilla and plant-volatile sensilla. Differentially expressed both among different sensilla and different neurons within a given sensillum. Expression coincides with that of several other olfactory-specific proteins that are involved in odor detection.

It localises to the cell membrane. Functionally, plays an olfactory role that is not restricted to pheromone sensitivity. In Manduca sexta (Tobacco hawkmoth), this protein is Sensory neuron membrane protein 1.